A 421-amino-acid polypeptide reads, in one-letter code: Signal recognition particle receptor FtsY (421 aa).

GTP contacts are provided by residues 228 to 235 (GINGAGKT), 309 to 313 (DTAGR), and 373 to 376 (TKLD).

This sequence belongs to the GTP-binding SRP family. FtsY subfamily. In terms of assembly, part of the signal recognition particle protein translocation system, which is composed of SRP and FtsY. SRP is a ribonucleoprotein composed of Ffh and a 4.5S RNA molecule.

Its subcellular location is the cell inner membrane. The protein localises to the cytoplasm. The catalysed reaction is GTP + H2O = GDP + phosphate + H(+). Involved in targeting and insertion of nascent membrane proteins into the cytoplasmic membrane. Acts as a receptor for the complex formed by the signal recognition particle (SRP) and the ribosome-nascent chain (RNC). Interaction with SRP-RNC leads to the transfer of the RNC complex to the Sec translocase for insertion into the membrane, the hydrolysis of GTP by both Ffh and FtsY, and the dissociation of the SRP-FtsY complex into the individual components. This is Signal recognition particle receptor FtsY from Neisseria meningitidis serogroup B (strain ATCC BAA-335 / MC58).